A 289-amino-acid polypeptide reads, in one-letter code: MRLREGPTHSFQPPSSVHSSLGSHVYTFSNGTAEADSSSEEEFDVMELRARGGEQQRINASREKVGNVILLERAITEDDNLNKLALQYGCKVSDIKRVNNLITDQDIYALKTIKIPVKVHGLLTERRDELTAFNASAPPEPEKELSLPSMESRDFTVYFKAIDQNIEEAAAQTHDLFNESFALDSPSLPPTRILGQKQPASGADWGIRWWNAVFIMLLVGIVLPVFYIVYFKTQGDSEGTFSIEGRTNVSTSLSPHTNTGHSMEQMTQRTSGFSPGLLQDTHKLLNPGG.

A disordered region spans residues 1 to 23; sequence MRLREGPTHSFQPPSSVHSSLGS. Over 1-208 the chain is Extracellular; the sequence is MRLREGPTHS…PASGADWGIR (208 aa). Residues 9–23 show a composition bias toward polar residues; sequence HSFQPPSSVHSSLGS. N-linked (GlcNAc...) asparagine glycans are attached at residues N30 and N59. The LysM domain maps to 71–115; the sequence is LERAITEDDNLNKLALQYGCKVSDIKRVNNLITDQDIYALKTIKI. N-linked (GlcNAc...) asparagine glycans are attached at residues N134 and N178. Residues 209-229 traverse the membrane as a helical segment; it reads WWNAVFIMLLVGIVLPVFYIV. The Cytoplasmic portion of the chain corresponds to 230–289; the sequence is YFKTQGDSEGTFSIEGRTNVSTSLSPHTNTGHSMEQMTQRTSGFSPGLLQDTHKLLNPGG. Residues 252–272 are disordered; the sequence is SLSPHTNTGHSMEQMTQRTSG.

The protein localises to the membrane. This Xenopus laevis (African clawed frog) protein is LysM and putative peptidoglycan-binding domain-containing protein 4 (lysmd4).